Here is a 165-residue protein sequence, read N- to C-terminus: Bacterial non-heme ferritin (165 aa).

Residues 1–145 form the Ferritin-like diiron domain; the sequence is MLKPEMIEKL…SIIDKLSLAG (145 aa). Fe cation contacts are provided by glutamate 17, glutamate 49, glutamate 50, histidine 53, glutamate 94, glutamate 126, glutamine 127, and glutamate 130.

It belongs to the ferritin family. Prokaryotic subfamily. As to quaternary structure, homooligomer of 24 subunits that assemble into a spherical protein shell (12 +/- 1 nM diameter) that can sequester at least 2000 iron atoms.

It is found in the cytoplasm. It carries out the reaction 4 Fe(2+) + O2 + 6 H2O = 4 iron(III) oxide-hydroxide + 12 H(+). Functionally, iron-storage protein. This is Bacterial non-heme ferritin (ftnA) from Escherichia coli O157:H7.